The sequence spans 155 residues: Small ribosomal subunit protein uS7 (155 aa).

It belongs to the universal ribosomal protein uS7 family. In terms of assembly, part of the 30S ribosomal subunit. Contacts proteins S9 and S11.

One of the primary rRNA binding proteins, it binds directly to 16S rRNA where it nucleates assembly of the head domain of the 30S subunit. Is located at the subunit interface close to the decoding center, probably blocks exit of the E-site tRNA. The sequence is that of Small ribosomal subunit protein uS7 from Corynebacterium diphtheriae (strain ATCC 700971 / NCTC 13129 / Biotype gravis).